The sequence spans 437 residues: Trigger factor (437 aa).

The 86-residue stretch at 161–246 folds into the PPIase FKBP-type domain; it reads DDQVNIDFVG…VNSVSAPVLP (86 aa).

The protein belongs to the FKBP-type PPIase family. Tig subfamily.

It is found in the cytoplasm. The enzyme catalyses [protein]-peptidylproline (omega=180) = [protein]-peptidylproline (omega=0). Involved in protein export. Acts as a chaperone by maintaining the newly synthesized protein in an open conformation. Functions as a peptidyl-prolyl cis-trans isomerase. In Pseudomonas putida (strain ATCC 700007 / DSM 6899 / JCM 31910 / BCRC 17059 / LMG 24140 / F1), this protein is Trigger factor.